Reading from the N-terminus, the 346-residue chain is N-acetyl-gamma-glutamyl-phosphate reductase (346 aa).

Cys149 is an active-site residue.

Belongs to the NAGSA dehydrogenase family. Type 1 subfamily.

Its subcellular location is the cytoplasm. It catalyses the reaction N-acetyl-L-glutamate 5-semialdehyde + phosphate + NADP(+) = N-acetyl-L-glutamyl 5-phosphate + NADPH + H(+). The protein operates within amino-acid biosynthesis; L-arginine biosynthesis; N(2)-acetyl-L-ornithine from L-glutamate: step 3/4. Functionally, catalyzes the NADPH-dependent reduction of N-acetyl-5-glutamyl phosphate to yield N-acetyl-L-glutamate 5-semialdehyde. The polypeptide is N-acetyl-gamma-glutamyl-phosphate reductase (Geotalea daltonii (strain DSM 22248 / JCM 15807 / FRC-32) (Geobacter daltonii)).